The following is a 307-amino-acid chain: 4-hydroxythreonine-4-phosphate dehydrogenase (307 aa).

Substrate-binding residues include His126 and Thr127. A divalent metal cation is bound by residues His156, His195, and His251. Residues Lys259, Asn268, and Arg277 each contribute to the substrate site.

The protein belongs to the PdxA family. As to quaternary structure, homodimer. It depends on Zn(2+) as a cofactor. Mg(2+) serves as cofactor. Requires Co(2+) as cofactor.

The protein resides in the cytoplasm. It catalyses the reaction 4-(phosphooxy)-L-threonine + NAD(+) = 3-amino-2-oxopropyl phosphate + CO2 + NADH. The protein operates within cofactor biosynthesis; pyridoxine 5'-phosphate biosynthesis; pyridoxine 5'-phosphate from D-erythrose 4-phosphate: step 4/5. Functionally, catalyzes the NAD(P)-dependent oxidation of 4-(phosphooxy)-L-threonine (HTP) into 2-amino-3-oxo-4-(phosphooxy)butyric acid which spontaneously decarboxylates to form 3-amino-2-oxopropyl phosphate (AHAP). The sequence is that of 4-hydroxythreonine-4-phosphate dehydrogenase from Helicobacter pylori (strain G27).